Consider the following 117-residue polypeptide: DNA-binding protein DDB_G0278111 (117 aa).

Positions 1-40 (MSSEKEIQQQLSQMQGQGFDPEAQQRQEAQRQEANERRQG) are disordered. Residues 8–22 (QQQLSQMQGQGFDPE) are compositionally biased toward low complexity. The segment covering 23 to 39 (AQQRQEAQRQEANERRQ) has biased composition (basic and acidic residues).

It belongs to the PDCD5 family.

This is DNA-binding protein DDB_G0278111 from Dictyostelium discoideum (Social amoeba).